The following is a 477-amino-acid chain: Protein kinase C and casein kinase substrate in neurons protein 2 (477 aa).

The F-BAR domain occupies 11-282; it reads VEVSSDSFWE…AIKSADAMED (272 aa). Residues 25 to 274 adopt a coiled-coil conformation; it reads KRTVKRIDDG…SIYRELEYAI (250 aa). 2 stretches are compositionally biased toward basic and acidic residues: residues 163–176 and 186–216; these read CKEEKLATSRETNS and QLKKLQDKVEKSKQDSQKTKEKYEKSLKDLD. 2 disordered regions span residues 163–218 and 314–412; these read CKEE…LDGT and RREK…PFDE. Low complexity predominate over residues 328–341; that stretch reads GISQSGEQSSIQNQ. Positions 342–357 are enriched in polar residues; it reads HSSHLSVQSAQSTNNP. The NPF1 motif lies at 356-358; sequence NPF. Over residues 370-388 the composition is skewed to basic and acidic residues; sequence TENKKIENVGSYEKTHPAE. Residues 395-407 are compositionally biased toward polar residues; the sequence is NNPFNPSDTNGDN. The NPF2 motif lies at 396 to 398; sequence NPF. Residues 408–410 carry the NPF3 motif; that stretch reads NPF. The 61-residue stretch at 417 to 477 folds into the SH3 domain; it reads TLEVRVRALY…YPANYVESVQ (61 aa).

This sequence belongs to the PACSIN family. In terms of assembly, interacts with adam13 through the SH3 domains. In terms of processing, phosphorylated. Ubiquitously expressed with higher expression in the ectoderm, the neuroectoderm, and dorsal mesoderm layers.

The protein localises to the cytoplasm. Its subcellular location is the cytoskeleton. It is found in the cytoplasmic vesicle membrane. The protein resides in the cell projection. It localises to the ruffle membrane. The protein localises to the early endosome. Its subcellular location is the recycling endosome membrane. It is found in the cell membrane. The protein resides in the membrane. It localises to the caveola. The protein localises to the cell junction. Its subcellular location is the adherens junction. Regulates the morphogenesis and endocytosis of caveolae. Lipid-binding protein that is able to promote the tubulation of the phosphatidic acid-containing membranes it preferentially binds. Plays a role in intracellular vesicle-mediated transport. Involved in the endocytosis of cell-surface receptors like the EGF receptor, contributing to its internalization in the absence of EGF stimulus. This is Protein kinase C and casein kinase substrate in neurons protein 2 (pacsin2) from Xenopus laevis (African clawed frog).